The primary structure comprises 26 residues: Oxyopinin-3b (26 aa).

Expressed by the venom gland.

It localises to the secreted. May have cytolytic and antimicrobial activity. The polypeptide is Oxyopinin-3b (Oxyopes takobius (Lynx spider)).